A 536-amino-acid polypeptide reads, in one-letter code: Phosphoenolpyruvate carboxykinase (ATP) (536 aa).

Substrate is bound by residues arginine 61, tyrosine 195, and lysine 201. ATP is bound by residues lysine 201, histidine 220, and 236-244 (GLSGTGKTT). Residues lysine 201 and histidine 220 each coordinate Mn(2+). Aspartate 257 is a binding site for Mn(2+). Glutamate 285, arginine 322, and threonine 447 together coordinate ATP. Arginine 322 is a binding site for substrate.

It belongs to the phosphoenolpyruvate carboxykinase (ATP) family. Mn(2+) is required as a cofactor.

The protein resides in the cytoplasm. It catalyses the reaction oxaloacetate + ATP = phosphoenolpyruvate + ADP + CO2. It participates in carbohydrate biosynthesis; gluconeogenesis. In terms of biological role, involved in the gluconeogenesis. Catalyzes the conversion of oxaloacetate (OAA) to phosphoenolpyruvate (PEP) through direct phosphoryl transfer between the nucleoside triphosphate and OAA. In Brucella melitensis biotype 1 (strain ATCC 23456 / CCUG 17765 / NCTC 10094 / 16M), this protein is Phosphoenolpyruvate carboxykinase (ATP).